The sequence spans 173 residues: Transmembrane protein 278 (173 aa).

Residues methionine 1–valine 14 show a composition bias toward acidic residues. The tract at residues methionine 1–arginine 25 is disordered. Helical transmembrane passes span histidine 31–glycine 51, alanine 53–leucine 73, and alanine 107–alanine 127. The segment at aspartate 141 to glutamate 165 is disordered.

It belongs to the TMEM88 family.

Its subcellular location is the membrane. This Mus musculus (Mouse) protein is Transmembrane protein 278 (Tmem278).